Consider the following 401-residue polypeptide: Lsg locus putative protein 1 (401 aa).

11 helical membrane passes run 8 to 28 (VIYL…LPYL), 36 to 56 (GYGS…VVSL), 87 to 107 (IIGS…LFYA), 132 to 152 (SYAF…VALL), 162 to 182 (KRIL…YFLY), 199 to 219 (ALFY…SFFL), 237 to 257 (LGLY…IQAL), 282 to 302 (WALF…IIPE), 320 to 340 (FILF…VNYL), 352 to 372 (CSVL…FTEI), and 374 to 394 (YIPY…YFMT).

It belongs to the polysaccharide synthase family. HI_0867/HI_1700 subfamily.

Its subcellular location is the cell membrane. The polypeptide is Lsg locus putative protein 1 (Haemophilus influenzae (strain ATCC 51907 / DSM 11121 / KW20 / Rd)).